We begin with the raw amino-acid sequence, 707 residues long: Tubulin polyglutamylase ttll-11 (707 aa).

Residues 124-488 (RFTIDTSRAK…PLVRDTLLLV (365 aa)) enclose the TTL domain. ATP-binding positions include 279–282 (QEYV), lysine 293, and aspartate 295. The interval 675-707 (RNRSGTNGRKQNFTDDNNNPNSFAHLPKINERL) is disordered. Residues 677-696 (RSGTNGRKQNFTDDNNNPNS) are compositionally biased toward polar residues.

It belongs to the tubulin--tyrosine ligase family. As to expression, expressed in amphid sensory neurons. Weakly expressed in body wall muscles. Isoform a: Specifically expressed in ciliated sensory neurons in the head, including the IL1s, OLQ, head CEP, and amphid neurons. In the male tail, expressed in HOA, RnA, and phasmid neurons. Isoform b: Specifically expressed in male and hermaphrodite IL2 ciliated sensory neurons, and in male-specific CEM, HOB and RnB ciliated sensory neurons.

The protein resides in the cell projection. The protein localises to the axon. Its subcellular location is the perikaryon. It localises to the dendrite. It is found in the cilium. The protein resides in the extracellular vesicle. The catalysed reaction is L-glutamyl-[protein] + L-glutamate + ATP = gamma-L-glutamyl-L-glutamyl-[protein] + ADP + phosphate + H(+). In terms of biological role, polyglutamylase which preferentially modifies tubulin. Involved in the side-chain initiation step of the polyglutamylation reaction. By controlling tubulin glutamylation, regulates ciliary specialization and motor-based transport. Promotes the formation of A and B tubule singlets by splaying microtubule doublets in cilia. Together with ttll-4 and 5, required for male mating. Specifically promotes tubulin glutamylation in a subset of ciliated neurons including amphid, phasmid, CEP and RnA neurons. Its function is as follows. Specifically promotes tubulin glutamylation in male ciliated CEM, HOB and RnB neurons that release bioactive extracellular vesicles. Regulates the localization of TRP channel pdk-2 in male CEM, HOB and RnB neurons. Regulates the environmental release of bioactive extracellular vesicles in cilia. The protein is Tubulin polyglutamylase ttll-11 of Caenorhabditis elegans.